The sequence spans 382 residues: Carbamoyl phosphate synthase small chain (382 aa).

A CPSase region spans residues 1–189; that stretch reads MIKSALLVLE…GLPEAKKEDE (189 aa). Residues serine 47, glycine 241, and glycine 243 each contribute to the L-glutamine site. The 188-residue stretch at 193–380 folds into the Glutamine amidotransferase type-1 domain; sequence HVVAYDFGAK…IELIEQYRKT (188 aa). Cysteine 269 acts as the Nucleophile in catalysis. Leucine 270, glutamine 273, asparagine 311, glycine 313, and phenylalanine 314 together coordinate L-glutamine. Catalysis depends on residues histidine 353 and glutamate 355.

It belongs to the CarA family. As to quaternary structure, composed of two chains; the small (or glutamine) chain promotes the hydrolysis of glutamine to ammonia, which is used by the large (or ammonia) chain to synthesize carbamoyl phosphate. Tetramer of heterodimers (alpha,beta)4.

It catalyses the reaction hydrogencarbonate + L-glutamine + 2 ATP + H2O = carbamoyl phosphate + L-glutamate + 2 ADP + phosphate + 2 H(+). The catalysed reaction is L-glutamine + H2O = L-glutamate + NH4(+). The protein operates within amino-acid biosynthesis; L-arginine biosynthesis; carbamoyl phosphate from bicarbonate: step 1/1. It participates in pyrimidine metabolism; UMP biosynthesis via de novo pathway; (S)-dihydroorotate from bicarbonate: step 1/3. Its function is as follows. Small subunit of the glutamine-dependent carbamoyl phosphate synthetase (CPSase). CPSase catalyzes the formation of carbamoyl phosphate from the ammonia moiety of glutamine, carbonate, and phosphate donated by ATP, constituting the first step of 2 biosynthetic pathways, one leading to arginine and/or urea and the other to pyrimidine nucleotides. The small subunit (glutamine amidotransferase) binds and cleaves glutamine to supply the large subunit with the substrate ammonia. This is Carbamoyl phosphate synthase small chain from Escherichia coli O157:H7.